The chain runs to 151 residues: MMAEERTDLEAQIVKDIHFKEIDLVNRDPKNINEDIVKVDFEDVIAEPVGTYSFDGVWKVSYTTFTVSKYWCYRLLSTLLGVPLALLWGFLFACISFCHIWAVVPCIKSYLIEIQCISHIYSLCIRTFCNPVFAALGQVCSNIKVMLRKEV.

Over 1 to 83 (MMAEERTDLE…RLLSTLLGVP (83 aa)) the chain is Cytoplasmic. Lys-38 is covalently cross-linked (Glycyl lysine isopeptide (Lys-Gly) (interchain with G-Cter in SUMO3)). The tract at residues 64 to 114 (TFTVSKYWCYRLLSTLLGVPLALLWGFLFACISFCHIWAVVPCIKSYLIEI) is required for interaction with DAG1. An intramembrane region (helical) is located at residues 84–104 (LALLWGFLFACISFCHIWAVV). The Cytoplasmic portion of the chain corresponds to 105 to 151 (PCIKSYLIEIQCISHIYSLCIRTFCNPVFAALGQVCSNIKVMLRKEV).

The protein belongs to the caveolin family. Homooligomer. Interacts with DYSF. Interacts with DLG1 and KCNA5; forms a ternary complex. Interacts with DAG1 (via its C-terminal); the interaction prevents binding of DAG1 with DMD. Interacts with TRIM72. Interacts with MUSK; may regulate MUSK signaling. Interacts with POPDC1. Interacts with CAVIN1, CAVIN2 and CAVIN4. In terms of processing, sumoylation with SUMO3 by PIAS4 may reduce agonist-induced internalization and desensitization of adrenergic receptor ABRD2. In terms of tissue distribution, expressed specifically in skeletal muscle and heart.

The protein resides in the golgi apparatus membrane. The protein localises to the cell membrane. It localises to the membrane. It is found in the caveola. Its subcellular location is the sarcolemma. In terms of biological role, may act as a scaffolding protein within caveolar membranes. Interacts directly with G-protein alpha subunits and can functionally regulate their activity. May also regulate voltage-gated potassium channels. Plays a role in the sarcolemma repair mechanism of both skeletal muscle and cardiomyocytes that permits rapid resealing of membranes disrupted by mechanical stress. Mediates the recruitment of CAVIN2 and CAVIN3 proteins to the caveolae. This Sus scrofa (Pig) protein is Caveolin-3 (CAV3).